The sequence spans 870 residues: Radial spoke head 10 homolog B (870 aa).

Positions 1–16 (MVKEKKKADKKGEKSA) are enriched in basic and acidic residues. The disordered stretch occupies residues 1–43 (MVKEKKKADKKGEKSARSPSSLSDNLDFSKQDGNTTRQEMSPA). Over residues 17 to 39 (RSPSSLSDNLDFSKQDGNTTRQE) the composition is skewed to polar residues. MORN repeat units follow at residues 86–108 (YEGEKVRGLYEGEGFAAFQGGCT), 109–131 (YRGMFSEGLMHGQGTYIWADGLK), 132–154 (YEGDFVKNVPMNHGVYTWPDGSM), 155–177 (YEGEVVNGMRNGFGMFKCSTQPV), 179–201 (YIGHWCNGKRHGKGSIYYNQEGT), 204–226 (YEGDWVQNIKKGWGIRCYKSGNI), 227–249 (YEGQWEDNMRHGEGRMRWLTTNE), 251–273 (YTGRWERGIQNGFGTHTWFLKRI), 284–306 (YIGEFVNGYRHGRGKFYYASGAM), and 307–329 (YDGEWVSNKKHGMGRLTFKNGRV). Residues 674–704 (NKSPSAVMSHESDAAHSDSARSSSSKLELSP) form a disordered region. Basic and acidic residues predominate over residues 683–692 (HESDAAHSDS). The span at 693–703 (ARSSSSKLELS) shows a compositional bias: low complexity. Positions 784-811 (KEKIRADRLRSTAQAQQRKMEDDELEAR) form a coiled coil. The tract at residues 840–870 (VSSSHLILDPPKEDVTVSPSSKTITSKKKKK) is disordered.

In terms of assembly, interacts with RSPH6A. Does not appear to be part of the axonemal radial spoke complexes 1 or 2.

The protein resides in the cytoplasm. It is found in the cytoskeleton. It localises to the cilium axoneme. The protein localises to the cell projection. Its subcellular location is the cilium. The protein resides in the flagellum. Functionally, may function as part of the axonemal radial spoke complex 3 (RS3). Radial spoke complexes are important for ciliary motility. The chain is Radial spoke head 10 homolog B (RSPH10B) from Homo sapiens (Human).